The primary structure comprises 769 residues: Multiple C2 domain and transmembrane region protein 5 (769 aa).

C2 domains follow at residues 23–143 (SVTG…PQWY), 184–305 (PEGV…SRWF), and 345–467 (YSSD…THSY). Positions 56, 62, 109, 111, and 116 each coordinate Ca(2+). Helical transmembrane passes span 604–624 (IILVLYPELILPTVFLYLFLI) and 712–732 (LFVLFCLIAAIVLYVTPFQVV).

The protein belongs to the MCTP family. Ca(2+) serves as cofactor. Highly expressed in roots meristems and shoot apical meristems (SAMs). Observed in flowers.

The protein localises to the endoplasmic reticulum membrane. May function as a signaling molecule by regulating the trafficking of other regulators. The protein is Multiple C2 domain and transmembrane region protein 5 of Arabidopsis thaliana (Mouse-ear cress).